A 337-amino-acid polypeptide reads, in one-letter code: Endochitinase 37 (337 aa).

The N-terminal stretch at 1-25 is a signal peptide; it reads MTRLLDASFLLLPVIASTLFGTASA. Residues 38 to 337 form the GH18 domain; sequence KVLQGYWENW…GSKNWTFGDN (300 aa). Residue E160 is the Proton donor of the active site. N331 carries N-linked (GlcNAc...) asparagine glycosylation.

Belongs to the glycosyl hydrolase 18 family. Chitinase class V subfamily. Monomer.

It localises to the secreted. It carries out the reaction Random endo-hydrolysis of N-acetyl-beta-D-glucosaminide (1-&gt;4)-beta-linkages in chitin and chitodextrins.. Functionally, secreted chitinase involved in the degradation of chitin, a component of the cell walls of fungi and exoskeletal elements of some animals (including worms and arthropods). Plays a morphogenetic role during apical growth, cell division and differentiation (cell wall morphogenesis). May be involved in the degradation and further assimilation of phytopathogenic fungi, namely mycoparasitism, the major mechanism accounting for the antagonistic activity against phytopathogenic fungi displayed by Trichoderma. This chain is Endochitinase 37 (chit37), found in Trichoderma harzianum (Hypocrea lixii).